The following is a 636-amino-acid chain: 1-deoxy-D-xylulose-5-phosphate synthase (636 aa).

Thiamine diphosphate is bound by residues H77 and 118–120 (GHS). D149 is a binding site for Mg(2+). Thiamine diphosphate-binding positions include 150–151 (GA), N178, Y290, and E375. N178 contacts Mg(2+).

It belongs to the transketolase family. DXPS subfamily. In terms of assembly, homodimer. The cofactor is Mg(2+). Requires thiamine diphosphate as cofactor.

It catalyses the reaction D-glyceraldehyde 3-phosphate + pyruvate + H(+) = 1-deoxy-D-xylulose 5-phosphate + CO2. The protein operates within metabolic intermediate biosynthesis; 1-deoxy-D-xylulose 5-phosphate biosynthesis; 1-deoxy-D-xylulose 5-phosphate from D-glyceraldehyde 3-phosphate and pyruvate: step 1/1. Its function is as follows. Catalyzes the acyloin condensation reaction between C atoms 2 and 3 of pyruvate and glyceraldehyde 3-phosphate to yield 1-deoxy-D-xylulose-5-phosphate (DXP). The protein is 1-deoxy-D-xylulose-5-phosphate synthase of Cytophaga hutchinsonii (strain ATCC 33406 / DSM 1761 / CIP 103989 / NBRC 15051 / NCIMB 9469 / D465).